We begin with the raw amino-acid sequence, 152 residues long: Cell division protein SepF (152 aa).

Belongs to the SepF family. As to quaternary structure, homodimer. Interacts with FtsZ.

Its subcellular location is the cytoplasm. In terms of biological role, cell division protein that is part of the divisome complex and is recruited early to the Z-ring. Probably stimulates Z-ring formation, perhaps through the cross-linking of FtsZ protofilaments. Its function overlaps with FtsA. In Listeria monocytogenes serotype 4b (strain CLIP80459), this protein is Cell division protein SepF.